The primary structure comprises 56 residues: Small ribosomal subunit protein bS21 (56 aa).

It belongs to the bacterial ribosomal protein bS21 family.

The polypeptide is Small ribosomal subunit protein bS21 (Dictyoglomus thermophilum (strain ATCC 35947 / DSM 3960 / H-6-12)).